A 123-amino-acid polypeptide reads, in one-letter code: Small ribosomal subunit protein uS12 (123 aa).

The residue at position 89 (D89) is a 3-methylthioaspartic acid.

The protein belongs to the universal ribosomal protein uS12 family. As to quaternary structure, part of the 30S ribosomal subunit. Contacts proteins S8 and S17. May interact with IF1 in the 30S initiation complex.

With S4 and S5 plays an important role in translational accuracy. In terms of biological role, interacts with and stabilizes bases of the 16S rRNA that are involved in tRNA selection in the A site and with the mRNA backbone. Located at the interface of the 30S and 50S subunits, it traverses the body of the 30S subunit contacting proteins on the other side and probably holding the rRNA structure together. The combined cluster of proteins S8, S12 and S17 appears to hold together the shoulder and platform of the 30S subunit. The sequence is that of Small ribosomal subunit protein uS12 from Pelagibacter ubique (strain HTCC1062).